A 1219-amino-acid chain; its full sequence is N-acetylglucosamine-1-phosphotransferase subunits alpha/beta (1219 aa).

The helical transmembrane segment at 27-47 (LCFGGLVLMIVSAFQFGEVVV) threads the bilayer. Asn-88, Asn-119, Asn-153, Asn-292, and Asn-381 each carry an N-linked (GlcNAc...) asparagine glycan. 4 disulfides stabilise this stretch: Cys-443-Cys-466, Cys-457-Cys-473, Cys-508-Cys-531, and Cys-522-Cys-538. 2 LNR repeats span residues 443–478 (CAEGCPGSWIKDGYCDKACNNSACDWDGGDCQGSSR) and 508–538 (CNQGCANSWLADKFCDQACNVLACGFDVGDC). Asp-454 contributes to the Ca(2+) binding site. Residue Asn-462 is glycosylated (N-linked (GlcNAc...) asparagine). Asp-469, Asp-472, Asp-519, Asp-534, and Asp-537 together coordinate Ca(2+). 8 N-linked (GlcNAc...) asparagine glycosylation sites follow: Asn-554, Asn-610, Asn-617, Asn-645, Asn-696, Asn-726, Asn-823, and Asn-974. The tract at residues 640-666 (ELPKSNTSTPVRDKEEEPKPTVATPEP) is disordered. In terms of domain architecture, DMAP1-binding spans 696–804 (NETLLPDEVK…DDVTTKAQSR (109 aa)). The EF-hand domain occupies 970-1005 (VQQLNISEVFDEIDTDHSGVLSDREIRTLATRIHEL). Residues Asp-983, Asp-985, Ser-987, and Glu-994 each contribute to the Ca(2+) site. N-linked (GlcNAc...) asparagine glycosylation is found at Asn-1021, Asn-1029, and Asn-1094. Residues 1180 to 1200 (VLVTLVVFTVMSFFAEQLVML) form a helical membrane-spanning segment.

It belongs to the stealth family. Hexamer of two alpha, two beta and two gamma (GNPTG) subunits; disulfide-linked. The alpha and/or the beta subunits of the enzyme constitute the catalytic subunits. In terms of processing, the alpha- and beta-subunits are generated by a proteolytic cleavage by mbtps1 protease at the Gln-893-Asp-894 bond.

It is found in the golgi apparatus membrane. The catalysed reaction is N(4)-[alpha-D-mannosyl-(1-&gt;2)-alpha-D-mannosyl-(glycan)]-L-asparaginyl-[protein] + UDP-N-acetyl-alpha-D-glucosamine = N(4)-[6-(N-acetyl-alpha-D-glucosaminyl-1-phospho)-alpha-D-mannosyl-(1-&gt;2)-alpha-D-mannosyl-(glycan)]-L-asparaginyl-[protein] + UMP + H(+). Catalyzes the formation of mannose 6-phosphate (M6P) markers on high mannose type oligosaccharides in the Golgi apparatus. M6P residues are required to bind to the M6P receptors (MPR), which mediate the vesicular transport of lysosomal enzymes to the endosomal/prelysosomal compartment. This is N-acetylglucosamine-1-phosphotransferase subunits alpha/beta (gnptab) from Danio rerio (Zebrafish).